The following is a 1002-amino-acid chain: Eukaryotic translation initiation factor 5B (1002 aa).

Disordered stretches follow at residues 1-172 (MAKK…GLAA) and 184-402 (EEQE…NKKD). Positions 13 to 23 (WDEEFEEDAAQ) are enriched in acidic residues. Polar residues predominate over residues 27 to 37 (ISATPTPNPES). A compositionally biased stretch (low complexity) spans 47 to 57 (EASASAEGAEA). Basic and acidic residues-rich tracts occupy residues 75 to 111 (KKVIEEKKDGKPILKSKKEKEKEKKEKEKQKKKEQAA) and 120 to 154 (QKEKNKELNKQNVEKAAAEKAAAEKSQKSKGESDK). Positions 155 to 172 (PSASAKKPAKKVPAGLAA) are enriched in low complexity. 2 stretches are compositionally biased toward basic and acidic residues: residues 184 to 252 (EEQE…ERRR) and 267 to 276 (AKKDGEENKP). A compositionally biased stretch (basic residues) spans 277–287 (KKVVYSKKKKR). Residues 297-306 (IKSDSKKDSE) are compositionally biased toward basic and acidic residues. 2 stretches are compositionally biased toward acidic residues: residues 307–342 (VVPDDELKESEDVLIDDWENLALGDDDEEGTNEETQ) and 352–370 (DQNQGEEEEEGEEEEEEEE). The segment covering 381–398 (STPAATPAATPTPSSASP) has biased composition (low complexity). A tr-type G domain is found at 403 to 621 (LRSPICCILG…LLELTQKRMS (219 aa)). Position 405 is a phosphoserine (serine 405). The tract at residues 412–419 (GHVDTGKT) is G1. Residue aspartate 415 participates in K(+) binding. Aspartate 415 serves as a coordination point for Na(+). Residues 415 to 420 (DTGKTK), glutamine 431, and 437 to 439 (GIT) contribute to the GTP site. Threonine 419 provides a ligand contact to Mg(2+). A K(+)-binding site is contributed by glycine 437. Glycine 437 provides a ligand contact to Na(+). Residues 437–441 (GITQQ) are G2. Position 439 (threonine 439) interacts with Mg(2+). The tract at residues 476-479 (DTPG) is G3. Residues 530–533 (NKID) and 599–600 (AV) each bind GTP. Residues 530–533 (NKID) form a G4 region. Residues 598–600 (SAV) are G5.

The protein belongs to the TRAFAC class translation factor GTPase superfamily. Classic translation factor GTPase family. IF-2 subfamily. Na(+) is required as a cofactor. The cofactor is K(+).

Its subcellular location is the cytoplasm. The catalysed reaction is GTP + H2O = GDP + phosphate + H(+). Its function is as follows. Plays a role in translation initiation. Translational GTPase that catalyzes the joining of the 40S and 60S subunits to form the 80S initiation complex with the initiator methionine-tRNA in the P-site base paired to the start codon. GTP binding and hydrolysis induces conformational changes in the enzyme that renders it active for productive interactions with the ribosome. The release of the enzyme after formation of the initiation complex is a prerequisite to form elongation-competent ribosomes. Stimulates 20S pre-rRNA cleavage to mature 18S rRNA by PIN-domain endonuclease NOB1. The protein is Eukaryotic translation initiation factor 5B of Saccharomyces cerevisiae (strain ATCC 204508 / S288c) (Baker's yeast).